An 88-amino-acid chain; its full sequence is YcgL domain-containing protein CGSHiGG_01115 (88 aa).

The 85-residue stretch at 1–85 folds into the YcgL domain; sequence MLCAIYKSKK…QDDGLFNSLS (85 aa).

In Haemophilus influenzae (strain PittGG), this protein is YcgL domain-containing protein CGSHiGG_01115.